Here is a 366-residue protein sequence, read N- to C-terminus: MEGNLIKINKWLYPVSWIYGTGVWLRNKLFDWGIYKERKFDIPVISVGNITVGGTGKTPHTEYLIRLLQKDYKVAVLSRGYKRKSKGFVLARPDTSVQMIGDEPFQMKQKFPDIHMAVDRDRCHGIEQLCNSHIAPGTEVIILDDAFQHRYVKPGINILLVDYHRLICEDTLLPAGRMREPENGKSRAHIVIVTKCPKDITPMDLRVLSKQMELYPYQQLYFTTLTYGKLHPLFTAGNAVSLKEIEKDKHILLVTGIASPAKLIQDLSPYNEHIESLAFSDHHDFTARDMELIKKRFMKLPEGKRMIITTEKDSVRLAAHPLMDEMLKPYIYMLPIEVAFLQDQQELFNSNITDYVRKNSRNSNFS.

51–58 provides a ligand contact to ATP; sequence TVGGTGKT.

This sequence belongs to the LpxK family.

The enzyme catalyses a lipid A disaccharide + ATP = a lipid IVA + ADP + H(+). It functions in the pathway glycolipid biosynthesis; lipid IV(A) biosynthesis; lipid IV(A) from (3R)-3-hydroxytetradecanoyl-[acyl-carrier-protein] and UDP-N-acetyl-alpha-D-glucosamine: step 6/6. Transfers the gamma-phosphate of ATP to the 4'-position of a tetraacyldisaccharide 1-phosphate intermediate (termed DS-1-P) to form tetraacyldisaccharide 1,4'-bis-phosphate (lipid IVA). The protein is Tetraacyldisaccharide 4'-kinase of Phocaeicola vulgatus (strain ATCC 8482 / DSM 1447 / JCM 5826 / CCUG 4940 / NBRC 14291 / NCTC 11154) (Bacteroides vulgatus).